We begin with the raw amino-acid sequence, 378 residues long: Succinyl-diaminopimelate desuccinylase (378 aa).

Residue histidine 68 participates in Zn(2+) binding. The active site involves aspartate 70. Aspartate 101 contacts Zn(2+). The Proton acceptor role is filled by glutamate 135. Residues glutamate 136, glutamate 164, and histidine 350 each contribute to the Zn(2+) site.

Belongs to the peptidase M20A family. DapE subfamily. As to quaternary structure, homodimer. The cofactor is Zn(2+). Requires Co(2+) as cofactor.

The catalysed reaction is N-succinyl-(2S,6S)-2,6-diaminopimelate + H2O = (2S,6S)-2,6-diaminopimelate + succinate. It functions in the pathway amino-acid biosynthesis; L-lysine biosynthesis via DAP pathway; LL-2,6-diaminopimelate from (S)-tetrahydrodipicolinate (succinylase route): step 3/3. Its function is as follows. Catalyzes the hydrolysis of N-succinyl-L,L-diaminopimelic acid (SDAP), forming succinate and LL-2,6-diaminopimelate (DAP), an intermediate involved in the bacterial biosynthesis of lysine and meso-diaminopimelic acid, an essential component of bacterial cell walls. The chain is Succinyl-diaminopimelate desuccinylase from Vibrio campbellii (strain ATCC BAA-1116).